Reading from the N-terminus, the 67-residue chain is Sec-independent protein translocase protein TatA (67 aa).

Residues 1-21 form a helical membrane-spanning segment; that stretch reads MMPGPFELIVILVIVLLLFGG.

The protein belongs to the TatA/E family. In terms of assembly, the Tat system comprises two distinct complexes: a TatABC complex, containing multiple copies of TatA, TatB and TatC subunits, and a separate TatA complex, containing only TatA subunits. Substrates initially bind to the TatABC complex, which probably triggers association of the separate TatA complex to form the active translocon.

Its subcellular location is the cell inner membrane. Functionally, part of the twin-arginine translocation (Tat) system that transports large folded proteins containing a characteristic twin-arginine motif in their signal peptide across membranes. TatA could form the protein-conducting channel of the Tat system. The polypeptide is Sec-independent protein translocase protein TatA (Ruthia magnifica subsp. Calyptogena magnifica).